The primary structure comprises 158 residues: Rhombotin-2 (158 aa).

2 LIM zinc-binding domains span residues cysteine 30 to glycine 89 and cysteine 94 to lysine 153.

As to quaternary structure, interacts via its LIM domains with ELF2 and LDB1. Also interacts with basic helix-loop-helix protein TAL1/SCL and can assemble in a complex with LMO2 and TAL1/SCL. Interacts with BEX2 and KDM5A.

It is found in the nucleus. Functionally, acts with TAL1/SCL to regulate red blood cell development. Also acts with LDB1 to maintain erythroid precursors in an immature state. This is Rhombotin-2 (LMO2) from Homo sapiens (Human).